A 130-amino-acid polypeptide reads, in one-letter code: Capsid protein (130 aa).

Residues 31 to 104 (EWLSNNSRSQ…FAATDDVTVI (74 aa)) are viral RNA-binding.

Belongs to the Leviviricetes capsid protein family. In terms of assembly, homodimer. The capsid proteins form dimers that assemble by group of 5. Twelve such pentamers are linked together with free dimers. The homodimers binds to the viral RNA via an operator hairpin, but also to many other RNA sequences in the viral genome; this interaction probably shifts the virus from the replicative to the assembly phase and ensures specific encapsidation of the viral genome.

It localises to the virion. Capsid protein self-assembles to form an icosahedral capsid with a T=3 symmetry, about 26 nm in diameter, and consisting of 89 capsid proteins dimers (178 capsid proteins). Involved in viral genome encapsidation through the interaction between a capsid protein dimer and the multiple packaging signals present in the RNA genome. The capsid also contains 1 copy of the A2 maturation protein. Its function is as follows. Acts as a translational repressor of viral replicase synthesis late in infection. This latter function is the result of capsid protein interaction with an RNA hairpin which contains the replicase ribosome-binding site. This chain is Capsid protein, found in Escherichia coli (Bacteriophage GA).